Reading from the N-terminus, the 285-residue chain is uncharacterized protein (285 aa).

A disordered region spans residues 1-25 (MANQKKKTLPPQHQNQQPGFEYLMD). 45-69 (IITGGDSGIGRAVSVLFAKEGANVV) serves as a coordination point for NADP(+). S177 is a binding site for substrate. Catalysis depends on Y190, which acts as the Proton acceptor.

Belongs to the short-chain dehydrogenases/reductases (SDR) family.

This is an uncharacterized protein from Bacillus subtilis (strain 168).